A 619-amino-acid polypeptide reads, in one-letter code: Dihydroxy-acid dehydratase (619 aa).

D81 lines the Mg(2+) pocket. Residue C122 coordinates [2Fe-2S] cluster. Residues D123 and K124 each contribute to the Mg(2+) site. K124 is subject to N6-carboxylysine. C195 contributes to the [2Fe-2S] cluster binding site. Mg(2+) is bound at residue E491. The active-site Proton acceptor is S517.

The protein belongs to the IlvD/Edd family. Homodimer. It depends on [2Fe-2S] cluster as a cofactor. Mg(2+) is required as a cofactor.

The catalysed reaction is (2R)-2,3-dihydroxy-3-methylbutanoate = 3-methyl-2-oxobutanoate + H2O. It catalyses the reaction (2R,3R)-2,3-dihydroxy-3-methylpentanoate = (S)-3-methyl-2-oxopentanoate + H2O. It participates in amino-acid biosynthesis; L-isoleucine biosynthesis; L-isoleucine from 2-oxobutanoate: step 3/4. Its pathway is amino-acid biosynthesis; L-valine biosynthesis; L-valine from pyruvate: step 3/4. Functions in the biosynthesis of branched-chain amino acids. Catalyzes the dehydration of (2R,3R)-2,3-dihydroxy-3-methylpentanoate (2,3-dihydroxy-3-methylvalerate) into 2-oxo-3-methylpentanoate (2-oxo-3-methylvalerate) and of (2R)-2,3-dihydroxy-3-methylbutanoate (2,3-dihydroxyisovalerate) into 2-oxo-3-methylbutanoate (2-oxoisovalerate), the penultimate precursor to L-isoleucine and L-valine, respectively. This Sphingopyxis alaskensis (strain DSM 13593 / LMG 18877 / RB2256) (Sphingomonas alaskensis) protein is Dihydroxy-acid dehydratase.